A 212-amino-acid polypeptide reads, in one-letter code: UPF0502 protein ECA2523 (212 aa).

The protein belongs to the UPF0502 family.

The polypeptide is UPF0502 protein ECA2523 (Pectobacterium atrosepticum (strain SCRI 1043 / ATCC BAA-672) (Erwinia carotovora subsp. atroseptica)).